Consider the following 202-residue polypeptide: uncharacterized protein (202 aa).

The disordered stretch occupies residues 118–202; the sequence is SSVSPVSSKK…KVSGTKKVKA (85 aa). A Phosphoserine modification is found at serine 121. Composition is skewed to basic residues over residues 142 to 163 and 186 to 202; these read EKSKKKKEKKEKKDKLKKKSKR and SSKSGLKKVSGTKKVKA.

Its subcellular location is the nucleus. The protein localises to the nucleolus. This is an uncharacterized protein from Schizosaccharomyces pombe (strain 972 / ATCC 24843) (Fission yeast).